We begin with the raw amino-acid sequence, 150 residues long: Large ribosomal subunit protein uL15 (150 aa).

Positions Met1–Gly55 are disordered. Positions Gln8–Lys32 are enriched in basic and acidic residues.

Belongs to the universal ribosomal protein uL15 family. In terms of assembly, part of the 50S ribosomal subunit.

In terms of biological role, binds to the 23S rRNA. This is Large ribosomal subunit protein uL15 from Bifidobacterium longum (strain NCC 2705).